Consider the following 238-residue polypeptide: Large ribosomal subunit protein uL2 (238 aa).

The disordered stretch occupies residues 201-238 (FGGGGHQHPGRPKTIARGTSPGRTVGHVAARQTGRSRK).

This sequence belongs to the universal ribosomal protein uL2 family. In terms of assembly, part of the 50S ribosomal subunit. Forms a bridge to the 30S subunit in the 70S ribosome.

One of the primary rRNA binding proteins. Required for association of the 30S and 50S subunits to form the 70S ribosome, for tRNA binding and peptide bond formation. It has been suggested to have peptidyltransferase activity; this is somewhat controversial. Makes several contacts with the 16S rRNA in the 70S ribosome. The polypeptide is Large ribosomal subunit protein uL2 (Methanoregula boonei (strain DSM 21154 / JCM 14090 / 6A8)).